Consider the following 93-residue polypeptide: Transcription factor RADIALIS (93 aa).

In terms of domain architecture, SANT spans 6-61 (GSGRPWSAKENKAFERALAVYDKDTPDRWANVARAVEGRTPEEVKKHYEILVEDIK).

Specifically expressed in the dorsal region of developing flowers.

It localises to the nucleus. In terms of biological role, involved in the dorsovental asymmetry of flowers. Promotes dorsal identity. This is Transcription factor RADIALIS (RAD) from Antirrhinum majus (Garden snapdragon).